Consider the following 504-residue polypeptide: ATP synthase subunit alpha (504 aa).

169 to 176 serves as a coordination point for ATP; it reads GDRKTGKT.

The protein belongs to the ATPase alpha/beta chains family. In terms of assembly, F-type ATPases have 2 components, CF(1) - the catalytic core - and CF(0) - the membrane proton channel. CF(1) has five subunits: alpha(3), beta(3), gamma(1), delta(1), epsilon(1). CF(0) has three main subunits: a(1), b(2) and c(9-12). The alpha and beta chains form an alternating ring which encloses part of the gamma chain. CF(1) is attached to CF(0) by a central stalk formed by the gamma and epsilon chains, while a peripheral stalk is formed by the delta and b chains.

Its subcellular location is the cell membrane. It carries out the reaction ATP + H2O + 4 H(+)(in) = ADP + phosphate + 5 H(+)(out). Produces ATP from ADP in the presence of a proton gradient across the membrane. The alpha chain is a regulatory subunit. The sequence is that of ATP synthase subunit alpha from Leuconostoc citreum (strain KM20).